The following is a 787-amino-acid chain: Longitudinals lacking protein, isoforms A/B/D/L (787 aa).

Residues valine 32–glutamine 97 enclose the BTB domain. 4 disordered regions span residues leucine 115–leucine 200, serine 228–serine 340, alanine 506–lysine 560, and threonine 653–glycine 677. 6 stretches are compositionally biased toward low complexity: residues serine 162 to proline 175, serine 228 to threonine 251, threonine 263 to serine 293, asparagine 329 to serine 340, histidine 537 to lysine 560, and serine 659 to serine 668. The segment at histidine 685–glutamate 707 adopts a C2H2-type 1; degenerate zinc-finger fold. Residues phenylalanine 714 to histidine 737 form a C2H2-type 2 zinc finger.

As to quaternary structure, isoform D interacts with JIL-1. As to expression, by stage 11, isoform B is expressed throughout the mesoderm, whereas isoform A, isoform D and isoform L are expressed throughout the ectoderm. Expression becomes restricted during later stages; starting from stage 14 to 16, isoform B is expressed in muscle. Isoform A, isoform D, and at low levels isoform B, are expressed in the CNS. Expression is also seen in specific types of cells in the embryo; isoform A and isoform L are expressed in a dynamic pattern in the ventral neurogenic region starting at stage 7. Isoform L is expressed around the tracheal pits at stage 11.

The protein localises to the nucleus. In terms of biological role, putative transcription factor required for axon growth and guidance in the central and peripheral nervous systems. Repels CNS axons away from the midline by promoting the expression of the midline repellent sli and its receptor robo. This is Longitudinals lacking protein, isoforms A/B/D/L from Drosophila melanogaster (Fruit fly).